The chain runs to 649 residues: 1-deoxy-D-xylulose-5-phosphate synthase 1 (649 aa).

Thiamine diphosphate is bound by residues His73 and 113–115; that span reads SHA. Asp144 contributes to the Mg(2+) binding site. Residues 145–146, Asn174, Tyr285, and Glu367 contribute to the thiamine diphosphate site; that span reads GA. Asn174 contributes to the Mg(2+) binding site. The disordered stretch occupies residues 623-649; it reads LLPGTGTRPGAQEYRPRMPLTDWSEPA.

Belongs to the transketolase family. DXPS subfamily. Homodimer. Mg(2+) serves as cofactor. The cofactor is thiamine diphosphate.

The enzyme catalyses D-glyceraldehyde 3-phosphate + pyruvate + H(+) = 1-deoxy-D-xylulose 5-phosphate + CO2. Its pathway is metabolic intermediate biosynthesis; 1-deoxy-D-xylulose 5-phosphate biosynthesis; 1-deoxy-D-xylulose 5-phosphate from D-glyceraldehyde 3-phosphate and pyruvate: step 1/1. Its function is as follows. Catalyzes the acyloin condensation reaction between C atoms 2 and 3 of pyruvate and glyceraldehyde 3-phosphate to yield 1-deoxy-D-xylulose-5-phosphate (DXP). This chain is 1-deoxy-D-xylulose-5-phosphate synthase 1, found in Kitasatospora griseola (Streptomyces griseolosporeus).